The primary structure comprises 72 residues: uncharacterized protein (72 aa).

A disordered region spans residues 52–72; it reads KGGRQRDEAVGVEELCKQHKE. Over residues 55 to 72 the composition is skewed to basic and acidic residues; it reads RQRDEAVGVEELCKQHKE.

It belongs to the YiiE family.

This is an uncharacterized protein from Escherichia coli O6:H1 (strain CFT073 / ATCC 700928 / UPEC).